A 1637-amino-acid polypeptide reads, in one-letter code: Kinesin-like protein KIF21B (1637 aa).

In terms of domain architecture, Kinesin motor spans 8-370; sequence CVKVAVRIRP…LKYANRARNI (363 aa). An ATP-binding site is contributed by 87 to 94; that stretch reads GQTGAGKT. 2 coiled-coil regions span residues 376–604 and 631–824; these read VNQD…EEEG and NFQA…ALRR. An interaction with TRIM3 region spans residues 400–1099; that stretch reads MEYKAGKRVI…LQALIYNVQQ (700 aa). A compositionally biased stretch (low complexity) spans 509–533; it reads ASARSPYSLGASPAAPAFGGSPASS. Disordered stretches follow at residues 509–538 and 552–628; these read ASAR…EDAS and KKKE…PEEK. The segment covering 578–627 has biased composition (acidic residues); the sequence is NSEETDENEAEEEEEERDESGCEEEEGREDEDEDSGSEESLVDSDSDPEE. Serine 579 is modified (phosphoserine). Threonine 582 carries the post-translational modification Phosphothreonine. Disordered stretches follow at residues 830–865 and 880–906; these read SERV…GARS and FLGD…GASQ. Low complexity predominate over residues 846–865; sequence SGAEVSASTTSSEAESGARS. Residues 928-1016 are a coiled coil; that stretch reads MQRMTIVNLE…EETKEELDST (89 aa). Phosphoserine occurs at positions 1149, 1167, and 1215. Positions 1194–1217 are enriched in polar residues; it reads RTVSLPTRGSTFPRQSRATETSPL. Residues 1194-1251 form a disordered region; sequence RTVSLPTRGSTFPRQSRATETSPLTRRKSYDRGQPIRSTDVGFTPPSSPPTRPRNDRN. Residue threonine 1237 is modified to Phosphothreonine. Phosphoserine is present on serine 1241. 7 WD repeats span residues 1306–1343, 1346–1384, 1410–1448, 1451–1493, 1502–1539, 1543–1582, and 1585–1622; these read GHTK…EIAA, GHPN…KCIR, QGEH…PVGK, GHIG…TGTI, PHYD…LIQQ, AHKD…PIGE, and GHDS…TPCL.

It belongs to the TRAFAC class myosin-kinesin ATPase superfamily. Kinesin family. Interacts with TRIM3; the interaction positively affects motility of KIF21B. Interacts with GABARAP and GABA(A) receptor subunits: GABRG2, GABRA1 and GABRA2. May interact with GABA(A) receptor subunits: GABRB2 and GABRB3.

The protein resides in the cytoplasm. The protein localises to the cytoskeleton. Its subcellular location is the cell projection. It localises to the dendrite. It is found in the growth cone. The protein resides in the axon. The protein localises to the cytoplasmic vesicle. Functionally, plus-end directed microtubule-dependent motor protein which displays processive activity. Is involved in regulation of microtubule dynamics, synapse function and neuronal morphology, including dendritic tree branching and spine formation. Plays a role in lerning and memory. Involved in delivery of gamma-aminobutyric acid (GABA(A)) receptor to cell surface. This Homo sapiens (Human) protein is Kinesin-like protein KIF21B (KIF21B).